Here is a 66-residue protein sequence, read N- to C-terminus: Toxin Boma6a (66 aa).

An LCN-type CS-alpha/beta domain is found at 2–64; the sequence is RDAYIAQNYN…VPIKVEGKCH (63 aa). 4 disulfides stabilise this stretch: cysteine 12–cysteine 63, cysteine 16–cysteine 36, cysteine 22–cysteine 46, and cysteine 26–cysteine 48.

Belongs to the long (4 C-C) scorpion toxin superfamily. Sodium channel inhibitor family. Alpha subfamily. In terms of tissue distribution, expressed by the venom gland.

It is found in the secreted. Functionally, alpha toxins bind voltage-independently at site-3 of sodium channels (Nav) and inhibit the inactivation of the activated channels, thereby blocking neuronal transmission. This Buthus occitanus mardochei (Moroccan scorpion) protein is Toxin Boma6a.